We begin with the raw amino-acid sequence, 111 residues long: MAVKIRLARGGAKKRPFYRVVIANAAAPRDGDFLEKVGTYNPMLASDNSERVVLKKDRIEYWLGTGAKPTERVAKFIEQAGLTLPEKVKKEMDVKAKNRKARSSKQEAKEA.

Residues 92 to 111 (MDVKAKNRKARSSKQEAKEA) are disordered.

The protein belongs to the bacterial ribosomal protein bS16 family.

This is Small ribosomal subunit protein bS16 from Rickettsia akari (strain Hartford).